The primary structure comprises 139 residues: Nucleoside diphosphate kinase (139 aa).

The ATP site is built by K9, F57, R85, T91, R102, and N112. H115 functions as the Pros-phosphohistidine intermediate in the catalytic mechanism.

The protein belongs to the NDK family. Homotetramer. Mg(2+) serves as cofactor.

It is found in the cytoplasm. The catalysed reaction is a 2'-deoxyribonucleoside 5'-diphosphate + ATP = a 2'-deoxyribonucleoside 5'-triphosphate + ADP. It catalyses the reaction a ribonucleoside 5'-diphosphate + ATP = a ribonucleoside 5'-triphosphate + ADP. Functionally, major role in the synthesis of nucleoside triphosphates other than ATP. The ATP gamma phosphate is transferred to the NDP beta phosphate via a ping-pong mechanism, using a phosphorylated active-site intermediate. This Desulfosudis oleivorans (strain DSM 6200 / JCM 39069 / Hxd3) (Desulfococcus oleovorans) protein is Nucleoside diphosphate kinase.